Reading from the N-terminus, the 667-residue chain is Endogenous retrovirus group K member 5 Gag polyprotein (667 aa).

Glycine 2 carries N-myristoyl glycine lipidation. The disordered stretch occupies residues 166 to 188 (KGPELVGPSESKPRGPSPLPAGQ). 2 CCHC-type zinc fingers span residues 543–560 (KKCYNCGQIGHLKRSCPV) and 580–597 (GLCPKCGKGKHWANQCHS). The disordered stretch occupies residues 598–667 (KFDKDGQPLS…CPAPQQAAPQ (70 aa)). A compositionally biased stretch (polar residues) spans 648-667 (GVSQLQQSNSCPAPQQAAPQ).

The protein belongs to the beta type-B retroviral Gag protein family. HERV class-II K(HML-2) gag subfamily. In terms of processing, myristoylation is essential for retroviral assembly. Alteration of the glycine residue leads to a block in the budding of particles and an accumulation of Gag inside the cell. Post-translationally, specific enzymatic cleavages may yield mature proteins.

The protein localises to the cell membrane. In terms of biological role, the products of the Gag polyproteins of infectious retroviruses perform highly complex orchestrated tasks during the assembly, budding, maturation, and infection stages of the viral replication cycle. During viral assembly, the proteins form membrane associations and self-associations that ultimately result in budding of an immature virion from the infected cell. Gag precursors also function during viral assembly to selectively bind and package two plus strands of genomic RNA. Endogenous Gag proteins may have kept, lost or modified their original function during evolution. This is Endogenous retrovirus group K member 5 Gag polyprotein (ERVK-5) from Homo sapiens (Human).